The following is a 207-amino-acid chain: Macrophage immunometabolism regulator (207 aa).

Position 1 is an N-acetylmethionine (Met-1). The tract at residues 1 to 41 (MEVDVNGESRSALTTLPLPVAEASSPGKAEAEKPRCSSTPC) is disordered. 3 positions are modified to phosphoserine: Ser-25, Ser-140, and Ser-167.

It belongs to the UNC119-binding protein family. As to quaternary structure, interacts with UNC119 and UNC119B; interaction preferentially takes place when UNC119 and UNC119B are unliganded with myristoylated proteins.

The protein resides in the cytoplasm. Its subcellular location is the cell projection. It localises to the cilium. Its function is as follows. Regulates the macrophage function, by enhancing the resolution of inflammation and wound repair functions mediated by M2 macrophages. The regulation of macrophage function is, due at least in part, to its ability to inhibit glycolysis. May play also a role in trafficking of proteins via its interaction with UNC119 and UNC119B cargo adapters: may help the release of UNC119 and UNC119B cargo or the recycling of UNC119 and UNC119B. May play a role in ciliary membrane localization via its interaction with UNC119B and protein transport into photoreceptor cells. This Bos taurus (Bovine) protein is Macrophage immunometabolism regulator (MACIR).